A 72-amino-acid polypeptide reads, in one-letter code: Teretoxin Tan11.1 (72 aa).

The signal sequence occupies residues 1 to 21 (MLATKMSVTFCFLLMLTTVML). Positions 22 to 31 (PTEAKTVAGR) are excised as a propeptide.

It belongs to the teretoxin H (TH) superfamily. In terms of processing, contains 4 disulfide bonds. In terms of tissue distribution, expressed by the venom duct.

Its subcellular location is the secreted. In Terebra anilis (Auger snail), this protein is Teretoxin Tan11.1.